A 916-amino-acid chain; its full sequence is Bifunctional aspartokinase/homoserine dehydrogenase 2, chloroplastic (916 aa).

The N-terminal 87 residues, 1 to 87 (MATLKPSFTV…VDQVQIPKGE (87 aa)), are a transit peptide targeting the chloroplast. The aspartokinase stretch occupies residues 88 to 336 (MWSVHKFGGT…VNEAVILQTL (249 aa)). The interval 337 to 562 (SYQEAWEMSY…LSRTTLAMGI (226 aa)) is interface. ACT domains follow at residues 412-487 (VEGT…VIPN) and 493-570 (AVGQ…LIGA). Residues 563–916 (VGPGLIGATL…RLASYLGAPS (354 aa)) are homoserine dehydrogenase. I568 is a binding site for NAD(+). Positions 568, 600, 649, and 673 each coordinate NADP(+). I568 provides a ligand contact to NADPH. NAD(+) is bound at residue T649. 2 residues coordinate NADPH: T649 and K673. Residues E700, V703, A705, and L707 each coordinate Na(+). Residues G758 and E761 each contribute to the NADP(+) site. Residues E761 and D772 each contribute to the L-homoserine site. The active-site Proton donor is the K776. G893 lines the NAD(+) pocket. G893 is a binding site for NADP(+). G893 provides a ligand contact to NADPH.

It in the N-terminal section; belongs to the aspartokinase family. In the C-terminal section; belongs to the homoserine dehydrogenase family. Homo- or heterodimer. It depends on a metal cation as a cofactor.

Its subcellular location is the plastid. It localises to the chloroplast. It carries out the reaction L-homoserine + NADP(+) = L-aspartate 4-semialdehyde + NADPH + H(+). The catalysed reaction is L-homoserine + NAD(+) = L-aspartate 4-semialdehyde + NADH + H(+). The enzyme catalyses L-aspartate + ATP = 4-phospho-L-aspartate + ADP. It functions in the pathway amino-acid biosynthesis; L-lysine biosynthesis via DAP pathway; (S)-tetrahydrodipicolinate from L-aspartate: step 1/4. It participates in amino-acid biosynthesis; L-methionine biosynthesis via de novo pathway; L-homoserine from L-aspartate: step 1/3. Its pathway is amino-acid biosynthesis; L-methionine biosynthesis via de novo pathway; L-homoserine from L-aspartate: step 3/3. The protein operates within amino-acid biosynthesis; L-threonine biosynthesis; L-threonine from L-aspartate: step 1/5. It functions in the pathway amino-acid biosynthesis; L-threonine biosynthesis; L-threonine from L-aspartate: step 3/5. Its activity is regulated as follows. Threonine interaction with Gln-443 leads to inhibition of aspartate kinase activity and facilitates the binding of a second threonine on Gln-524, leading to a partial inhibition of homoserine dehydrogenase activity (25% of activity remaining at saturation with threonine). Homoserine dehydrogenase activity is also partially inhibited by cysteine (15% of activity remaining at saturation with cysteine). No synergy between threonine and cysteine for the inhibition. 13-fold activation of aspartate kinase activity by cysteine, isoleucine, valine, serine and alanine at 2.5 mM and 4-fold activation by leucine at 2.5 mM, but no activation of homoserine dehydrogenase activity. In terms of biological role, bifunctional aspartate kinase and homoserine dehydrogenase that catalyzes the first and the third steps toward the synthesis of lysine, methionine and threonine from aspartate. This chain is Bifunctional aspartokinase/homoserine dehydrogenase 2, chloroplastic (AKHSDH2), found in Arabidopsis thaliana (Mouse-ear cress).